The primary structure comprises 109 residues: Small ribosomal subunit protein bS6 (109 aa).

This sequence belongs to the bacterial ribosomal protein bS6 family.

Its function is as follows. Binds together with bS18 to 16S ribosomal RNA. This Dehalococcoides mccartyi (strain CBDB1) protein is Small ribosomal subunit protein bS6.